The chain runs to 163 residues: Superoxide dismutase [Mn] (163 aa).

Residues H2, H50, D134, and H138 each contribute to the Mn(2+) site.

Belongs to the iron/manganese superoxide dismutase family. It depends on Mn(2+) as a cofactor.

It catalyses the reaction 2 superoxide + 2 H(+) = H2O2 + O2. Its function is as follows. Destroys superoxide anion radicals which are normally produced within the cells and which are toxic to biological systems. The sequence is that of Superoxide dismutase [Mn] (sodA) from Mycobacterium kansasii.